We begin with the raw amino-acid sequence, 562 residues long: NAD-dependent malic enzyme (562 aa).

Tyrosine 101 functions as the Proton donor in the catalytic mechanism. Arginine 154 is an NAD(+) binding site. The active-site Proton acceptor is the lysine 172. Residues glutamate 243, aspartate 244, and aspartate 267 each coordinate a divalent metal cation. Aspartate 267 and asparagine 415 together coordinate NAD(+).

This sequence belongs to the malic enzymes family. In terms of assembly, homotetramer. Mg(2+) serves as cofactor. Requires Mn(2+) as cofactor.

It catalyses the reaction (S)-malate + NAD(+) = pyruvate + CO2 + NADH. It carries out the reaction oxaloacetate + H(+) = pyruvate + CO2. The protein is NAD-dependent malic enzyme of Shewanella putrefaciens (strain CN-32 / ATCC BAA-453).